The sequence spans 784 residues: Protein translocase subunit SecA 2 (784 aa).

Residues Gln-94, 112–116, and Asp-501 contribute to the ATP site; that span reads GEGKT.

Belongs to the SecA family. As to quaternary structure, monomer and homodimer. Part of the essential Sec protein translocation apparatus which comprises SecA, SecYEG and auxiliary proteins SecDF. Other proteins may also be involved.

It localises to the cell membrane. The protein resides in the cytoplasm. It carries out the reaction ATP + H2O + cellular proteinSide 1 = ADP + phosphate + cellular proteinSide 2.. Part of the Sec protein translocase complex. Interacts with the SecYEG preprotein conducting channel. Has a central role in coupling the hydrolysis of ATP to the transfer of proteins into and across the cell membrane, serving as an ATP-driven molecular motor driving the stepwise translocation of polypeptide chains across the membrane. This is Protein translocase subunit SecA 2 from Mycolicibacterium smegmatis (strain ATCC 700084 / mc(2)155) (Mycobacterium smegmatis).